A 350-amino-acid polypeptide reads, in one-letter code: Serine-threonine kinase receptor-associated protein (350 aa).

WD repeat units follow at residues 12–56, 57–96, 98–137, 141–179, 180–212, 221–262, and 263–302; these read GHTR…GTFL, GHKG…ELMT, AHKH…AEPK, GHTS…EVKS, LNFN…HSAV, EAPA…ESYK, and GHFG…TYGL. 3 positions are modified to phosphoserine: Ser312, Ser335, and Ser338. A disordered region spans residues 326–350; the sequence is AEEELEEIASENSDSIYSSTPEVKA. A compositionally biased stretch (polar residues) spans 337–350; sequence NSDSIYSSTPEVKA. A Phosphotyrosine modification is found at Tyr342.

This sequence belongs to the WD repeat STRAP family. As to quaternary structure, part of the core SMN complex that contains SMN1, GEMIN2/SIP1, DDX20/GEMIN3, GEMIN4, GEMIN5, GEMIN6, GEMIN7, GEMIN8 and STRAP/UNRIP. Part of the SMN-Sm complex that contains SMN1, GEMIN2/SIP1, DDX20/GEMIN3, GEMIN4, GEMIN5, GEMIN6, GEMIN7, GEMIN8, STRAP/UNRIP and the Sm proteins SNRPB, SNRPD1, SNRPD2, SNRPD3, SNRPE, SNRPF and SNRPG. Interacts directly with GEMIN6 and GEMIN7. Associates with the SMN complex in the cytoplasm but not in the nucleus. Also interacts with CSDE1/UNR and MAWBP. Interacts with PDPK1. Interacts with TRIM48.

The protein localises to the cytoplasm. The protein resides in the nucleus. Its function is as follows. The SMN complex catalyzes the assembly of small nuclear ribonucleoproteins (snRNPs), the building blocks of the spliceosome, and thereby plays an important role in the splicing of cellular pre-mRNAs. Most spliceosomal snRNPs contain a common set of Sm proteins SNRPB, SNRPD1, SNRPD2, SNRPD3, SNRPE, SNRPF and SNRPG that assemble in a heptameric protein ring on the Sm site of the small nuclear RNA to form the core snRNP (Sm core). In the cytosol, the Sm proteins SNRPD1, SNRPD2, SNRPE, SNRPF and SNRPG are trapped in an inactive 6S pICln-Sm complex by the chaperone CLNS1A that controls the assembly of the core snRNP. To assemble core snRNPs, the SMN complex accepts the trapped 5Sm proteins from CLNS1A forming an intermediate. Binding of snRNA inside 5Sm triggers eviction of the SMN complex, thereby allowing binding of SNRPD3 and SNRPB to complete assembly of the core snRNP. STRAP plays a role in the cellular distribution of the SMN complex. Negatively regulates TGF-beta signaling but positively regulates the PDPK1 kinase activity by enhancing its autophosphorylation and by significantly reducing the association of PDPK1 with 14-3-3 protein. This is Serine-threonine kinase receptor-associated protein (Strap) from Rattus norvegicus (Rat).